We begin with the raw amino-acid sequence, 61 residues long: Short neurotoxin 2 (61 aa).

4 disulfides stabilise this stretch: cysteine 3–cysteine 23, cysteine 17–cysteine 40, cysteine 42–cysteine 53, and cysteine 54–cysteine 59.

Belongs to the three-finger toxin family. Short-chain subfamily. Type I alpha-neurotoxin sub-subfamily. As to expression, expressed by the venom gland.

The protein resides in the secreted. Its function is as follows. Binds to muscle nicotinic acetylcholine receptor (nAChR) and inhibit acetylcholine from binding to the receptor, thereby impairing neuromuscular transmission. This Naja annulifera (Banded Egyptian cobra) protein is Short neurotoxin 2.